The following is a 273-amino-acid chain: Glutamate racemase (273 aa).

Substrate contacts are provided by residues Asp-9–Ser-10 and Tyr-41–Gly-42. Catalysis depends on Cys-73, which acts as the Proton donor/acceptor. Asn-74–Thr-75 is a substrate binding site. The active-site Proton donor/acceptor is Cys-183. Thr-184 to His-185 provides a ligand contact to substrate.

This sequence belongs to the aspartate/glutamate racemases family.

The catalysed reaction is L-glutamate = D-glutamate. Its pathway is cell wall biogenesis; peptidoglycan biosynthesis. Its function is as follows. Provides the (R)-glutamate required for cell wall biosynthesis. The protein is Glutamate racemase of Shewanella oneidensis (strain ATCC 700550 / JCM 31522 / CIP 106686 / LMG 19005 / NCIMB 14063 / MR-1).